Here is a 412-residue protein sequence, read N- to C-terminus: Dihydrolipoyllysine-residue acetyltransferase component of pyruvate dehydrogenase complex (412 aa).

The 77-residue stretch at Pro-2 to Ser-78 folds into the Lipoyl-binding domain. Lys-43 carries the N6-lipoyllysine modification. The 38-residue stretch at Phe-132–Thr-169 folds into the Peripheral subunit-binding (PSBD) domain. Residue His-385 is part of the active site.

This sequence belongs to the 2-oxoacid dehydrogenase family. As to quaternary structure, forms a 24-polypeptide structural core with octahedral symmetry. It depends on (R)-lipoate as a cofactor.

The enzyme catalyses N(6)-[(R)-dihydrolipoyl]-L-lysyl-[protein] + acetyl-CoA = N(6)-[(R)-S(8)-acetyldihydrolipoyl]-L-lysyl-[protein] + CoA. Functionally, the pyruvate dehydrogenase complex catalyzes the overall conversion of pyruvate to acetyl-CoA and CO(2). It contains multiple copies of three enzymatic components: pyruvate dehydrogenase (E1), dihydrolipoamide acetyltransferase (E2) and lipoamide dehydrogenase (E3). This chain is Dihydrolipoyllysine-residue acetyltransferase component of pyruvate dehydrogenase complex (pdhC), found in Rickettsia felis (strain ATCC VR-1525 / URRWXCal2) (Rickettsia azadi).